A 62-amino-acid chain; its full sequence is Trypsin inhibitor MCI-3 (62 aa).

The protein belongs to the protease inhibitor I13 (potato type I serine protease inhibitor) family.

This chain is Trypsin inhibitor MCI-3, found in Momordica charantia (Bitter gourd).